Reading from the N-terminus, the 101-residue chain is Small ribosomal subunit protein uS14 (101 aa).

This sequence belongs to the universal ribosomal protein uS14 family. Part of the 30S ribosomal subunit. Contacts proteins S3 and S10.

Its function is as follows. Binds 16S rRNA, required for the assembly of 30S particles and may also be responsible for determining the conformation of the 16S rRNA at the A site. In Ralstonia pickettii (strain 12J), this protein is Small ribosomal subunit protein uS14.